The following is a 430-amino-acid chain: DNA-binding protein cre-1 (430 aa).

Polar residues predominate over residues 1–19; that stretch reads MQRVQSAVDFSNLLNPSES. Disordered stretches follow at residues 1–77, 97–187, 265–340, and 357–430; these read MQRV…LPRP, IRTH…PHSY, SRSH…RNLS, and LDGQ…MDRL. Residues 30-46 are compositionally biased toward low complexity; it reads PRQQTAQPQQQQQQPQP. 2 C2H2-type zinc fingers span residues 78–100 and 106–130; these read YKCPLCDKAFHRLEHQTRHIRTH and HACQFPGCSKKFSRSDELTRHSRIH. Over residues 97 to 106 the composition is skewed to basic and acidic residues; it reads IRTHTGEKPH. 2 stretches are compositionally biased toward polar residues: residues 130–147 and 175–187; these read HSNPNSRRGNKGQQQQQH and AMSSPNVSPPHSY. Residues 268-277 are compositionally biased toward basic and acidic residues; it reads HSHEDHDDHY. The span at 289–303 shows a compositional bias: low complexity; the sequence is PNSPNSTAPSSPTFS. The span at 412 to 422 shows a compositional bias: polar residues; that stretch reads SVRNSSSTSLS.

The protein belongs to the creA/MIG C2H2-type zinc-finger protein family.

The protein localises to the nucleus. Its function is as follows. Involved in carbon catabolite repression. Represses the transcription of a number of genes by binding to a GC-rich region in their promoter. The polypeptide is DNA-binding protein cre-1 (cre-1) (Neurospora crassa (strain ATCC 24698 / 74-OR23-1A / CBS 708.71 / DSM 1257 / FGSC 987)).